The primary structure comprises 200 residues: ATP-dependent Clp protease proteolytic subunit 2 (200 aa).

Ser100 serves as the catalytic Nucleophile.

This sequence belongs to the peptidase S14 family. As to quaternary structure, fourteen ClpP subunits assemble into 2 heptameric rings which stack back to back to give a disk-like structure with a central cavity, resembling the structure of eukaryotic proteasomes.

The protein resides in the cytoplasm. It carries out the reaction Hydrolysis of proteins to small peptides in the presence of ATP and magnesium. alpha-casein is the usual test substrate. In the absence of ATP, only oligopeptides shorter than five residues are hydrolyzed (such as succinyl-Leu-Tyr-|-NHMec, and Leu-Tyr-Leu-|-Tyr-Trp, in which cleavage of the -Tyr-|-Leu- and -Tyr-|-Trp bonds also occurs).. Its function is as follows. Cleaves peptides in various proteins in a process that requires ATP hydrolysis. Has a chymotrypsin-like activity. Plays a major role in the degradation of misfolded proteins. In Streptomyces avermitilis (strain ATCC 31267 / DSM 46492 / JCM 5070 / NBRC 14893 / NCIMB 12804 / NRRL 8165 / MA-4680), this protein is ATP-dependent Clp protease proteolytic subunit 2.